Reading from the N-terminus, the 244-residue chain is MSTSKRKRADEVQWNKRSTKKKASAPPVKKTGGKADRPSLQIQTLLHSGDTMITVPSGGGCDLISTYARGSDEGNRHTSETLTYKVGVDYHFVADAGACRYSNRGTGVMWLVYDTTPGGNSPSTKDIFAYPDALVAWPTTWKVSRELCHRFVVKRRWLFTMETDGRIGSDIPPTNQSWPPCKRNIDFHKFTSGLGVRTQWKNVTDGGVGAIQRGALYMVIAPGNGVTFTAHGQTRLYFKSVGNQ.

The Bipartite nuclear localization signal signature appears at 1–24 (MSTSKRKRADEVQWNKRSTKKKAS). The segment at 1–38 (MSTSKRKRADEVQWNKRSTKKKASAPPVKKTGGKADRP) is disordered.

It belongs to the geminiviridae capsid protein family. As to quaternary structure, homomultimer. Interacts with the movement protein. Binds to single-stranded and double-stranded viral DNA.

The protein localises to the virion. It localises to the host nucleus. Its function is as follows. Encapsidates the viral genome into characteristic twinned ('geminate') particles. Binds the genomic viral ssDNA and shuttles it into and out of the cell nucleus. Plays a role in protection of the genome from degradation, virus acquisition and transmission by insect vectors, infectivity, and systemic movement. The CP of monopartite geminiviruses is absolutely essential for virus movement. This chain is Capsid protein, found in Maize streak virus genotype E (isolate Pat) (MSV).